We begin with the raw amino-acid sequence, 153 residues long: Ribonuclease VapC6 (153 aa).

A PINc domain is found at 6-152 (VFIDSSVMVG…EKVDFIEIIK (147 aa)). Asp9 and Asp120 together coordinate Mg(2+).

Belongs to the PINc/VapC protein family. Mg(2+) is required as a cofactor.

Toxic component of a type II toxin-antitoxin (TA) system. An RNase. In Methanocaldococcus jannaschii (strain ATCC 43067 / DSM 2661 / JAL-1 / JCM 10045 / NBRC 100440) (Methanococcus jannaschii), this protein is Ribonuclease VapC6.